A 539-amino-acid chain; its full sequence is MRTLTELDKKVLRAEFPQLSFSEDADIDRYFELRSLGDQRQALDIYNRTLLVKYPQKERRVLLMSYYRKRDVRFKEVLADALAELAQKKIQEIKKIIDFFAAAVAPLDLTDVRTLIRVCEKIVRSISLNRFESVHFSRKHTHYAQWLLYREKEMEKAADIIRMYVTDTLSSVRTFRQESHTRATYGFCTEAHGTDTSSTIDFSQLVFTAEQVRTIEIAKTITKIEDRVLAYAIKYWHRYDDRAFENTVLLYSRKYKTHHYNIFHSIKTGRSHQWKDEDILHLVLAHVASGYYYSISGDLYLQRNWHWLKARLVERAEHHHQKGKKVPATHRRSSTPHARKTAGTRARTRARKKELPALPSEKISKKDSGESKQKDETAGMERVFRHNTKNVRTCSSRASRTGTHAEARHSDIVTSSPVHQEGAATVERSSPPEETVESIAHIVKRITGKDYGVYRELFFKEVRTAIRTVLNRATVRRGLRLRARKNNAEDTIYHFLHTHYDDPYQRWPNSHEYQQVHTLGFSIHSLEPIIVTWAESEGL.

The disordered stretch occupies residues 316–433; the sequence is AEHHHQKGKK…ATVERSSPPE (118 aa). A compositionally biased stretch (basic residues) spans 318-352; sequence HHHQKGKKVPATHRRSSTPHARKTAGTRARTRARK. The segment covering 362–384 has biased composition (basic and acidic residues); it reads KISKKDSGESKQKDETAGMERVF. The segment covering 390–402 has biased composition (polar residues); it reads NVRTCSSRASRTG.

This is an uncharacterized protein from Treponema pallidum (strain Nichols).